Here is a 97-residue protein sequence, read N- to C-terminus: DNA-directed RNA polymerase subunit omega (97 aa).

It belongs to the RNA polymerase subunit omega family. The RNAP catalytic core consists of 2 alpha, 1 beta, 1 beta' and 1 omega subunit. When a sigma factor is associated with the core the holoenzyme is formed, which can initiate transcription.

The enzyme catalyses RNA(n) + a ribonucleoside 5'-triphosphate = RNA(n+1) + diphosphate. Promotes RNA polymerase assembly. Latches the N- and C-terminal regions of the beta' subunit thereby facilitating its interaction with the beta and alpha subunits. The polypeptide is DNA-directed RNA polymerase subunit omega (Coxiella burnetii (strain Dugway 5J108-111)).